A 110-amino-acid polypeptide reads, in one-letter code: Large ribosomal subunit protein uL22 (110 aa).

Belongs to the universal ribosomal protein uL22 family. As to quaternary structure, part of the 50S ribosomal subunit.

Its function is as follows. This protein binds specifically to 23S rRNA; its binding is stimulated by other ribosomal proteins, e.g. L4, L17, and L20. It is important during the early stages of 50S assembly. It makes multiple contacts with different domains of the 23S rRNA in the assembled 50S subunit and ribosome. In terms of biological role, the globular domain of the protein is located near the polypeptide exit tunnel on the outside of the subunit, while an extended beta-hairpin is found that lines the wall of the exit tunnel in the center of the 70S ribosome. The sequence is that of Large ribosomal subunit protein uL22 from Haemophilus ducreyi (strain 35000HP / ATCC 700724).